We begin with the raw amino-acid sequence, 202 residues long: Dephospho-CoA kinase (202 aa).

Positions 4–201 (VIGLTGGIAS…QKYLAMSKQN (198 aa)) constitute a DPCK domain. Position 12–17 (12–17 (ASGKTT)) interacts with ATP.

Belongs to the CoaE family.

It is found in the cytoplasm. It catalyses the reaction 3'-dephospho-CoA + ATP = ADP + CoA + H(+). It participates in cofactor biosynthesis; coenzyme A biosynthesis; CoA from (R)-pantothenate: step 5/5. Its function is as follows. Catalyzes the phosphorylation of the 3'-hydroxyl group of dephosphocoenzyme A to form coenzyme A. This Vibrio vulnificus (strain CMCP6) protein is Dephospho-CoA kinase.